Here is a 187-residue protein sequence, read N- to C-terminus: Threonylcarbamoyl-AMP synthase (187 aa).

The YrdC-like domain occupies 4-187 (TPDLDAAVAT…DARTGQILRD (184 aa)).

The protein belongs to the SUA5 family. TsaC subfamily.

It localises to the cytoplasm. The catalysed reaction is L-threonine + hydrogencarbonate + ATP = L-threonylcarbamoyladenylate + diphosphate + H2O. In terms of biological role, required for the formation of a threonylcarbamoyl group on adenosine at position 37 (t(6)A37) in tRNAs that read codons beginning with adenine. Catalyzes the conversion of L-threonine, HCO(3)(-)/CO(2) and ATP to give threonylcarbamoyl-AMP (TC-AMP) as the acyladenylate intermediate, with the release of diphosphate. This chain is Threonylcarbamoyl-AMP synthase, found in Xanthomonas campestris pv. campestris (strain 8004).